A 353-amino-acid polypeptide reads, in one-letter code: Photosystem II D2 protein (353 aa).

N-acetylthreonine is present on Thr2. A Phosphothreonine modification is found at Thr2. A helical membrane pass occupies residues 41–61 (CAYFALGGWFTGTTFVTSWYT). Residue His118 coordinates chlorophyll a. The helical transmembrane segment at 125-141 (GFMLRQFELARSVQLRP) threads the bilayer. Pheophytin a contacts are provided by Gln130 and Asn143. Residues 153-166 (VFVSVFLIYPLGQS) form a helical membrane-spanning segment. His198 provides a ligand contact to chlorophyll a. The chain crosses the membrane as a helical span at residues 208–228 (AALLCAIHGATVENTLFEDGD). His215 and Phe262 together coordinate a plastoquinone. His215 lines the Fe cation pocket. His269 contacts Fe cation. The chain crosses the membrane as a helical span at residues 279-295 (GLWMSALGVVGLALNLR).

It belongs to the reaction center PufL/M/PsbA/D family. PSII is composed of 1 copy each of membrane proteins PsbA, PsbB, PsbC, PsbD, PsbE, PsbF, PsbH, PsbI, PsbJ, PsbK, PsbL, PsbM, PsbT, PsbX, PsbY, PsbZ, Psb30/Ycf12, at least 3 peripheral proteins of the oxygen-evolving complex and a large number of cofactors. It forms dimeric complexes. The D1/D2 heterodimer binds P680, chlorophylls that are the primary electron donor of PSII, and subsequent electron acceptors. It shares a non-heme iron and each subunit binds pheophytin, quinone, additional chlorophylls, carotenoids and lipids. There is also a Cl(-1) ion associated with D1 and D2, which is required for oxygen evolution. The PSII complex binds additional chlorophylls, carotenoids and specific lipids. serves as cofactor.

The protein localises to the plastid. The protein resides in the chloroplast thylakoid membrane. The catalysed reaction is 2 a plastoquinone + 4 hnu + 2 H2O = 2 a plastoquinol + O2. Its function is as follows. Photosystem II (PSII) is a light-driven water:plastoquinone oxidoreductase that uses light energy to abstract electrons from H(2)O, generating O(2) and a proton gradient subsequently used for ATP formation. It consists of a core antenna complex that captures photons, and an electron transfer chain that converts photonic excitation into a charge separation. The D1/D2 (PsbA/PsbD) reaction center heterodimer binds P680, the primary electron donor of PSII as well as several subsequent electron acceptors. D2 is needed for assembly of a stable PSII complex. In Nuphar advena (Common spatterdock), this protein is Photosystem II D2 protein.